The following is a 689-amino-acid chain: Elongation factor G (689 aa).

The 275-residue stretch at 8-282 folds into the tr-type G domain; that stretch reads ERTRNIGIMA…AVVDYLPAPT (275 aa). Residues 17 to 24, 81 to 85, and 135 to 138 each bind GTP; these read AHIDAGKT, DTPGH, and NKMD.

It belongs to the TRAFAC class translation factor GTPase superfamily. Classic translation factor GTPase family. EF-G/EF-2 subfamily.

The protein resides in the cytoplasm. Functionally, catalyzes the GTP-dependent ribosomal translocation step during translation elongation. During this step, the ribosome changes from the pre-translocational (PRE) to the post-translocational (POST) state as the newly formed A-site-bound peptidyl-tRNA and P-site-bound deacylated tRNA move to the P and E sites, respectively. Catalyzes the coordinated movement of the two tRNA molecules, the mRNA and conformational changes in the ribosome. This Desulforudis audaxviator (strain MP104C) protein is Elongation factor G.